Consider the following 634-residue polypeptide: DNA-directed RNA polymerase subunit gamma (634 aa).

4 residues coordinate Zn(2+): C74, C76, C89, and C92. Positions 471, 473, and 475 each coordinate Mg(2+).

The protein belongs to the RNA polymerase beta' chain family. RpoC1 subfamily. In terms of assembly, in cyanobacteria the RNAP catalytic core is composed of 2 alpha, 1 beta, 1 beta', 1 gamma and 1 omega subunit. When a sigma factor is associated with the core the holoenzyme is formed, which can initiate transcription. Mg(2+) serves as cofactor. Zn(2+) is required as a cofactor.

It catalyses the reaction RNA(n) + a ribonucleoside 5'-triphosphate = RNA(n+1) + diphosphate. DNA-dependent RNA polymerase catalyzes the transcription of DNA into RNA using the four ribonucleoside triphosphates as substrates. This chain is DNA-directed RNA polymerase subunit gamma, found in Prochlorococcus marinus (strain MIT 9215).